Here is a 263-residue protein sequence, read N- to C-terminus: L-histidine 2-aminobutanoyltransferase (263 aa).

This sequence belongs to the methyltransferase superfamily. CntL family. In terms of assembly, interacts with CntM.

It catalyses the reaction L-histidine + S-adenosyl-L-methionine = (2S)-2-amino-4-{[(1S)-1-carboxy-2-(1H-imidazol-4-yl)ethyl]amino}butanoate + S-methyl-5'-thioadenosine + H(+). In terms of biological role, catalyzes the nucleophilic attack of one alpha-aminobutanoate moiety from SAM onto L-histidine to produce the intermediate (2S)-2-amino-4-{[(1S)-1-carboxy-2-(1H-imidazol-4-yl)ethyl]amino}butanoate. Functions in the biosynthesis of the metallophore pseudopaline, which is involved in the acquisition of nickel and zinc, and thus enables bacterial growth inside the host, where metal access is limited. Therefore, this enzyme probably contributes to Pseudomonas virulence. Cannot use D-histidine in place of L-histidine as substrate. This is L-histidine 2-aminobutanoyltransferase from Pseudomonas aeruginosa (strain UCBPP-PA14).